Consider the following 365-residue polypeptide: Histidinol-phosphate aminotransferase 2 (365 aa).

The residue at position 222 (Lys222) is an N6-(pyridoxal phosphate)lysine.

This sequence belongs to the class-II pyridoxal-phosphate-dependent aminotransferase family. Histidinol-phosphate aminotransferase subfamily. As to quaternary structure, homodimer. Pyridoxal 5'-phosphate is required as a cofactor.

It catalyses the reaction L-histidinol phosphate + 2-oxoglutarate = 3-(imidazol-4-yl)-2-oxopropyl phosphate + L-glutamate. It participates in amino-acid biosynthesis; L-histidine biosynthesis; L-histidine from 5-phospho-alpha-D-ribose 1-diphosphate: step 7/9. The polypeptide is Histidinol-phosphate aminotransferase 2 (hisC2) (Bordetella bronchiseptica (strain ATCC BAA-588 / NCTC 13252 / RB50) (Alcaligenes bronchisepticus)).